The primary structure comprises 516 residues: MEAKPVAMEVEGVEAAGGKPRFRMPVDSDLKATEFWLFSFARPHMASFHMAWFSFFCCFVSTFAAPPLLPLIRDTLGLTATDIGNAGIASVSGAVFARLAMGTACDLVGPRLASASLILLTTPAVYCSSIIQSPSGYLLVRFFTGISLASFVSAQFWMSSMFSAPKVGLANGVAGGWGNLGGGAVQLLMPLVYEAIHKIGSTPFTAWRIAFFIPGLMQTFSAIAVLAFGQDMPGGNYGKLHKTGDMHKDSFGNVLRHALTNYRGWILALTYGYSFGVELTIDNVVHQYFYDRFDVNLQTAGLIAASFGMANIISRPGGGLLSDWLSSRYGMRGRLWGLWTVQTIGGVLCVVLGIVDFSFAASVAVMVLFSFFVQAACGLTFGIVPFVSRRSLGLISGMTGGGGNVGAVLTQYIFFHGTKYKTETGIKYMGLMIIACTLPVMLIYFPQWGGMLVGPRKGATAEEYYSREWSDHEREKGFNAASVRFAENSVREGGRSSANGGQPRHTVPVDASPAGV.

Transmembrane regions (helical) follow at residues 52–72, 76–96, 112–132, 142–162, 172–192, 209–229, 265–285, 299–319, 335–354, 367–387, 395–415, and 425–445; these read WFSF…LPLI, LGLT…GAVF, LASA…SIIQ, FFTG…SSMF, GVAG…MPLV, IAFF…LAFG, WILA…DNVV, TAGL…PGGG, LWGL…VLGI, VLFS…VPFV, ISGM…YIFF, and GIKY…LIYF. The disordered stretch occupies residues 489–516; it reads SVREGGRSSANGGQPRHTVPVDASPAGV.

This sequence belongs to the major facilitator superfamily. Nitrate/nitrite porter (TC 2.A.1.8) family. Heterotetramer composed of two NRT2.3 and two NAR2.1. Isoform 1 interacts with NAR2.1, but not isoform 2. In terms of tissue distribution, expressed in the stelar cells of both primary and lateral roots, particularly at the site of lateral root emergence, root-shoot junction zone, vascular tissues of adventitious root primordia, leaves, germ tips and seed scutellum.

The protein resides in the cell membrane. Functionally, involved in nitrate transport, but does not seem to be able to mediate transport by its own. Acts as a dual component transporter with NAR2.1. Imports nitrate with high affinity when expressed with NAR2.1 in a heterologous system (Xenopus oocytes). Plays a key role in long-distance nitrate transport from root to shoot particularly at low external nitrate supply. The protein is High-affinity nitrate transporter 2.3 (NRT2.3) of Oryza sativa subsp. japonica (Rice).